A 143-amino-acid polypeptide reads, in one-letter code: Transcriptional regulator MraZ (143 aa).

SpoVT-AbrB domains follow at residues 5-47 (TFTP…PREE) and 76-119 (ADEQ…DAQA).

Belongs to the MraZ family. In terms of assembly, forms oligomers.

The protein localises to the cytoplasm. It localises to the nucleoid. This is Transcriptional regulator MraZ from Corynebacterium urealyticum (strain ATCC 43042 / DSM 7109).